The sequence spans 101 residues: Ascorbate-specific PTS system EIIB component (101 aa).

The PTS EIIB type-2 domain occupies 3-96; it reads VRILAVCGNG…KLLKVIKEHF (94 aa). C9 serves as the catalytic Phosphocysteine intermediate. At C9 the chain carries Phosphocysteine.

The protein localises to the cytoplasm. The enzyme catalyses N(pros)-phospho-L-histidyl-[protein] + L-ascorbate(out) = L-ascorbate 6-phosphate(in) + L-histidyl-[protein]. In terms of biological role, the phosphoenolpyruvate-dependent sugar phosphotransferase system (sugar PTS), a major carbohydrate active transport system, catalyzes the phosphorylation of incoming sugar substrates concomitantly with their translocation across the cell membrane. The enzyme II UlaABC PTS system is involved in ascorbate transport. In Shigella dysenteriae serotype 1 (strain Sd197), this protein is Ascorbate-specific PTS system EIIB component (ulaB).